The following is a 101-amino-acid chain: Small ubiquitin-related modifier 1 (101 aa).

The residue at position 2 (Ser-2) is an N-acetylserine. Ser-2 is modified (phosphoserine). Lys-7 participates in a covalent cross-link: Glycyl lysine isopeptide (Lys-Gly) (interchain with G-Cter in SUMO1); alternate. Residue Lys-7 forms a Glycyl lysine isopeptide (Lys-Gly) (interchain with G-Cter in SUMO2); alternate linkage. The residue at position 9 (Ser-9) is a Phosphoserine. Residues Lys-16, Lys-17, and Lys-23 each participate in a glycyl lysine isopeptide (Lys-Gly) (interchain with G-Cter in SUMO2) cross-link. In terms of domain architecture, Ubiquitin-like spans 20-97; the sequence is EYIKLKVIGQ…IEVYQEQTGG (78 aa). A Glycyl lysine isopeptide (Lys-Gly) (interchain with G-Cter in SUMO1) cross-link involves residue Lys-25. Ser-32 carries the post-translational modification Phosphoserine. Glycyl lysine isopeptide (Lys-Gly) (interchain with G-Cter in SUMO2) cross-links involve residues Lys-37, Lys-39, Lys-45, and Lys-46. Residue Gly-97 forms a Glycyl lysine isopeptide (Gly-Lys) (interchain with K-? in acceptor proteins) linkage. The propeptide occupies 98–101; sequence HSNV.

This sequence belongs to the ubiquitin family. SUMO subfamily. In terms of assembly, covalently attached to KCNB1; UBE2I increases cross-linking with KCNB1 and PIAS1 decreases cross-links with KCNB1. Interacts with SAE2, RANBP2, PIAS1 and PIAS2. Interacts with PRKN. Covalently attached to a number of proteins such as IKFZ1, PML, RANGAP1, HIPK2, SP100, p53, p73-alpha, MDM2, JUN, DNMT3B and TDG. Also interacts with HIF1A, HIPK2, HIPK3, CHD3, EXOSC9, RAD51 and RAD52. Interacts with USP25 (via ts SIM domain); the interaction weakly sumoylates USP25. Interacts with SIMC1, CASP8AP2, RNF111 and SOBP (via SIM domains). Interacts with BHLHE40/DEC1. Interacts with RWDD3. Interacts with UBE2I/UBC9 and this interaction is enhanced in the presence of RWDD3. Interacts with MTA1. Interacts with SENP2. Interacts with HINT1. Cleavage of precursor form by SENP1 or SENP2 is necessary for function. In terms of processing, polymeric SUMO1 chains undergo polyubiquitination by RNF4.

The protein localises to the nucleus membrane. It localises to the nucleus speckle. Its subcellular location is the cytoplasm. It is found in the nucleus. The protein resides in the PML body. The protein localises to the cell membrane. In terms of biological role, ubiquitin-like protein that can be covalently attached to proteins as a monomer or a lysine-linked polymer. Covalent attachment via an isopeptide bond to its substrates requires prior activation by the E1 complex SAE1-SAE2 and linkage to the E2 enzyme UBE2I, and can be promoted by E3 ligases such as PIAS1-4, RANBP2 or CBX4. This post-translational modification on lysine residues of proteins plays a crucial role in a number of cellular processes such as nuclear transport, DNA replication and repair, mitosis and signal transduction. Involved for instance in targeting RANGAP1 to the nuclear pore complex protein RANBP2. Covalently attached to the voltage-gated potassium channel KCNB1; this modulates the gating characteristics of KCNB1. Polymeric SUMO1 chains are also susceptible to polyubiquitination which functions as a signal for proteasomal degradation of modified proteins. May be involved in modified proteins. May also regulate a network of genes involved in palate development. Covalently attached to ZFHX3. This chain is Small ubiquitin-related modifier 1 (SUMO1), found in Ictidomys tridecemlineatus (Thirteen-lined ground squirrel).